A 298-amino-acid polypeptide reads, in one-letter code: Homoserine kinase (298 aa).

ATP is bound at residue 83 to 93 (PISRGLGSSSS).

It belongs to the GHMP kinase family. Homoserine kinase subfamily.

It is found in the cytoplasm. It catalyses the reaction L-homoserine + ATP = O-phospho-L-homoserine + ADP + H(+). The protein operates within amino-acid biosynthesis; L-threonine biosynthesis; L-threonine from L-aspartate: step 4/5. Catalyzes the ATP-dependent phosphorylation of L-homoserine to L-homoserine phosphate. The chain is Homoserine kinase from Clostridium botulinum (strain Eklund 17B / Type B).